Reading from the N-terminus, the 109-residue chain is MITSEDIRERGVPDFKPGDTIRVEYRVVEGNRERTQAFEGLCIARRGSGISQTFVVRKNSFGVDVERIFPLHSPKIAGIKVISRGAPRRAKLYYIREKVGRKARVKKAR.

Belongs to the bacterial ribosomal protein bL19 family.

Functionally, this protein is located at the 30S-50S ribosomal subunit interface and may play a role in the structure and function of the aminoacyl-tRNA binding site. This Rubrobacter xylanophilus (strain DSM 9941 / JCM 11954 / NBRC 16129 / PRD-1) protein is Large ribosomal subunit protein bL19.